Consider the following 88-residue polypeptide: uncharacterized protein (88 aa).

This is an uncharacterized protein from Bacillus subtilis (strain 168).